We begin with the raw amino-acid sequence, 303 residues long: uncharacterized protein (303 aa).

4 helical membrane passes run 102 to 122 (TYLL…VMAI), 132 to 152 (FVLF…FLFF), 184 to 204 (LLYF…SLIY), and 221 to 241 (FILL…FLLF).

The protein resides in the membrane. This is an uncharacterized protein from Dictyostelium discoideum (Social amoeba).